The sequence spans 155 residues: Interleukin-2 (155 aa).

The signal sequence occupies residues 1 to 20 (MYSRQLASCVALALVLLANS). Thr-23 carries an O-linked (GalNAc...) threonine glycan. Residues Cys-78 and Cys-126 are joined by a disulfide bond.

Belongs to the IL-2 family.

The protein resides in the secreted. In terms of biological role, cytokine produced by activated CD4-positive helper T-cells and to a lesser extend activated CD8-positive T-cells and natural killer (NK) cells that plays pivotal roles in the immune response and tolerance. Binds to a receptor complex composed of either the high-affinity trimeric IL-2R (IL2RA/CD25, IL2RB/CD122 and IL2RG/CD132) or the low-affinity dimeric IL-2R (IL2RB and IL2RG). Interaction with the receptor leads to oligomerization and conformation changes in the IL-2R subunits resulting in downstream signaling starting with phosphorylation of JAK1 and JAK3. In turn, JAK1 and JAK3 phosphorylate the receptor to form a docking site leading to the phosphorylation of several substrates including STAT5. This process leads to activation of several pathways including STAT, phosphoinositide-3-kinase/PI3K and mitogen-activated protein kinase/MAPK pathways. Functions as a T-cell growth factor and can increase NK-cell cytolytic activity as well. Promotes strong proliferation of activated B-cells and subsequently immunoglobulin production. Plays a pivotal role in regulating the adaptive immune system by controlling the survival and proliferation of regulatory T-cells, which are required for the maintenance of immune tolerance. Moreover, participates in the differentiation and homeostasis of effector T-cell subsets, including Th1, Th2, Th17 as well as memory CD8-positive T-cells. This Meriones unguiculatus (Mongolian jird) protein is Interleukin-2 (IL2).